The chain runs to 186 residues: Ribosome-recycling factor (186 aa).

The protein belongs to the RRF family.

Its subcellular location is the cytoplasm. Its function is as follows. Responsible for the release of ribosomes from messenger RNA at the termination of protein biosynthesis. May increase the efficiency of translation by recycling ribosomes from one round of translation to another. The sequence is that of Ribosome-recycling factor from Bordetella avium (strain 197N).